A 486-amino-acid chain; its full sequence is Maintenance of mitochondrial morphology protein 1 (486 aa).

Topologically, residues 1-20 (MNFQQSAIPPFSFLLSFTQG) are lumenal. A helical membrane pass occupies residues 21 to 41 (FLLGQLSVVLLIGAFIKFFIF). At 42-486 (GEAPPPPSRG…GSLPDGAVGN (445 aa)) the chain is on the cytoplasmic side. Disordered stretches follow at residues 70 to 96 (TNEA…SSST), 271 to 320 (TPPL…SPKS), and 387 to 486 (RTGV…AVGN). Residues 83-96 (STSNVLRPVPSSST) are compositionally biased toward polar residues. One can recognise an SMP-LTD domain in the interval 128 to 379 (QPESLDWFNV…EPRVQVVGLP (252 aa)). Positions 271 to 282 (TPPLHTPSPSPA) are enriched in pro residues. Positions 292–306 (QSQPENNSSNPNQQS) are enriched in low complexity. Composition is skewed to polar residues over residues 398–407 (TGSNAASRSA) and 440–450 (DSVSRSSSFNV). Residues 460-474 (MTREDSRGAISDDFH) are compositionally biased toward basic and acidic residues.

This sequence belongs to the MMM1 family. As to quaternary structure, homodimer. Component of the ER-mitochondria encounter structure (ERMES) or MDM complex, composed of mmm1, mdm10, mdm12 and mdm34. A mmm1 homodimer associates with one molecule of mdm12 on each side in a pairwise head-to-tail manner, and the SMP-LTD domains of mmm1 and mdm12 generate a continuous hydrophobic tunnel for phospholipid trafficking.

It localises to the endoplasmic reticulum membrane. In terms of biological role, component of the ERMES/MDM complex, which serves as a molecular tether to connect the endoplasmic reticulum (ER) and mitochondria. Components of this complex are involved in the control of mitochondrial shape and protein biogenesis, and function in nonvesicular lipid trafficking between the ER and mitochondria. The mdm12-mmm1 subcomplex functions in the major beta-barrel assembly pathway that is responsible for biogenesis of all outer membrane beta-barrel proteins, and acts in a late step after the SAM complex. The mdm10-mdm12-mmm1 subcomplex further acts in the TOM40-specific pathway after the action of the mdm12-mmm1 complex. Essential for establishing and maintaining the structure of mitochondria and maintenance of mtDNA nucleoids. This is Maintenance of mitochondrial morphology protein 1 from Aspergillus terreus (strain NIH 2624 / FGSC A1156).